A 158-amino-acid chain; its full sequence is NAD(P)H-quinone oxidoreductase subunit J, chloroplastic (158 aa).

This sequence belongs to the complex I 30 kDa subunit family. In terms of assembly, NDH is composed of at least 16 different subunits, 5 of which are encoded in the nucleus.

Its subcellular location is the plastid. The protein localises to the chloroplast thylakoid membrane. It carries out the reaction a plastoquinone + NADH + (n+1) H(+)(in) = a plastoquinol + NAD(+) + n H(+)(out). The catalysed reaction is a plastoquinone + NADPH + (n+1) H(+)(in) = a plastoquinol + NADP(+) + n H(+)(out). NDH shuttles electrons from NAD(P)H:plastoquinone, via FMN and iron-sulfur (Fe-S) centers, to quinones in the photosynthetic chain and possibly in a chloroplast respiratory chain. The immediate electron acceptor for the enzyme in this species is believed to be plastoquinone. Couples the redox reaction to proton translocation, and thus conserves the redox energy in a proton gradient. The sequence is that of NAD(P)H-quinone oxidoreductase subunit J, chloroplastic from Vitis vinifera (Grape).